The following is a 250-amino-acid chain: Ribonuclease HII (250 aa).

Residues 66–250 (QLVAGVDEVG…SFAPVSEYEK (185 aa)) form the RNase H type-2 domain. Positions 72, 73, and 164 each coordinate a divalent metal cation.

This sequence belongs to the RNase HII family. Requires Mn(2+) as cofactor. Mg(2+) is required as a cofactor.

It is found in the cytoplasm. The catalysed reaction is Endonucleolytic cleavage to 5'-phosphomonoester.. Functionally, endonuclease that specifically degrades the RNA of RNA-DNA hybrids. The chain is Ribonuclease HII from Lactobacillus johnsonii (strain CNCM I-12250 / La1 / NCC 533).